The sequence spans 314 residues: Ribonuclease Z (314 aa).

Zn(2+) is bound by residues histidine 60, histidine 62, aspartate 64, histidine 65, histidine 140, aspartate 209, and histidine 269. The active-site Proton acceptor is aspartate 64.

The protein belongs to the RNase Z family. As to quaternary structure, homodimer. Requires Zn(2+) as cofactor.

It catalyses the reaction Endonucleolytic cleavage of RNA, removing extra 3' nucleotides from tRNA precursor, generating 3' termini of tRNAs. A 3'-hydroxy group is left at the tRNA terminus and a 5'-phosphoryl group is left at the trailer molecule.. Its function is as follows. Zinc phosphodiesterase, which displays some tRNA 3'-processing endonuclease activity. Probably involved in tRNA maturation, by removing a 3'-trailer from precursor tRNA. This is Ribonuclease Z from Methanococcus maripaludis (strain C5 / ATCC BAA-1333).